A 658-amino-acid chain; its full sequence is MLRSLKALKLNSLNAQKGIRQFCSDSKISGQVIGIDLGTTNSCVAVMQGAEARVLENAEGGRTTPSVVAFTEDNQKIVGLPAKRQMVTNAENTLFATKRLIGRRFDDPMTKKDMTMVPYKIVKGPNGDAWFEVKGKMISPSEAGAMVLQKMKETAETNLGGPVTDAVITVPAYFDDSQRQATRDAGTIAGLKVQRIINEPTAAALAYGFKKDEPKTVAVYDLGGGTFDISILEIVGGVFEVRATNGDTFLGGEDFDNALLEHFVAEFKKEKGIDLTKDTMATQRLREAAEKAKCELSSTLTTEINLPYISAGPSGPVHFNMKLTRSKFEQLVADLIQRTIGPCNICLKDAGLSTSEINEVILVGGMTRMPKVQELAKSTFNKEPFKGVNPDEAVAVGAAIQGGVLKGDTKGIVLVDVTPLSLGIETLGGVFTRLIKKNTNIPASKTDTFSTAADGQSEVEIKVFQGEREMAVDNKLLAKFTLFGLPPLPKGVPQIEVTFDIDVNGMLQVIAKDKATGKAQQVRIQTSGGLSKDDIARILKESEANAEVDRKRKELVEARNNGESVVYQVEKDLVEFKDYLSQPQTEEIKKAVQAVRDVLAKEDGSAIEAEIKKLHDLTRSSFETAYKAKLDSSASKSSSTENKENKDNTTEAEFTEKK.

Residues 629–658 (KLDSSASKSSSTENKENKDNTTEAEFTEKK) are disordered. A compositionally biased stretch (low complexity) spans 631–640 (DSSASKSSST). Residues 641–658 (ENKENKDNTTEAEFTEKK) are compositionally biased toward basic and acidic residues.

The protein belongs to the heat shock protein 70 family.

It is found in the mitochondrion. Its function is as follows. May function in protein folding and assembly, and disassembly of protein complexes. The chain is Heat shock 70 kDa protein, mitochondrial (mhsp70) from Dictyostelium discoideum (Social amoeba).